We begin with the raw amino-acid sequence, 87 residues long: Small ribosomal subunit protein uS19m (87 aa).

The protein belongs to the universal ribosomal protein uS19 family.

It is found in the mitochondrion. The chain is Small ribosomal subunit protein uS19m (mrps19) from Dictyostelium citrinum (Slime mold).